The sequence spans 332 residues: L-lactate dehydrogenase A chain (332 aa).

Residues 29 to 57 and arginine 99 contribute to the NAD(+) site; that span reads GAVG…MEDK. Residues arginine 106, asparagine 138, and arginine 169 each coordinate substrate. Asparagine 138 provides a ligand contact to NAD(+). The active-site Proton acceptor is the histidine 193. Residue threonine 248 coordinates substrate.

It belongs to the LDH/MDH superfamily. LDH family. As to quaternary structure, homotetramer.

It is found in the cytoplasm. It carries out the reaction (S)-lactate + NAD(+) = pyruvate + NADH + H(+). It participates in fermentation; pyruvate fermentation to lactate; (S)-lactate from pyruvate: step 1/1. Interconverts simultaneously and stereospecifically pyruvate and lactate with concomitant interconversion of NADH and NAD(+). This chain is L-lactate dehydrogenase A chain (LDHA), found in Sceloporus undulatus (Eastern fence lizard).